The following is a 509-amino-acid chain: Maturase K (509 aa).

The protein belongs to the intron maturase 2 family. MatK subfamily.

It localises to the plastid. Usually encoded in the trnK tRNA gene intron. Probably assists in splicing its own and other chloroplast group II introns. The chain is Maturase K from Cuscuta reflexa (Southern Asian dodder).